A 336-amino-acid polypeptide reads, in one-letter code: F420-dependent glucose-6-phosphate dehydrogenase (336 aa).

Residue D39 coordinates coenzyme F420-(gamma-Glu)n. H40 functions as the Proton donor in the catalytic mechanism. Coenzyme F420-(gamma-Glu)n-binding positions include T76 and 107 to 108; that span reads TG. The active-site Proton acceptor is E109. Coenzyme F420-(gamma-Glu)n-binding positions include N112, 177 to 178, and 180 to 181; these read GG and VV. Residues T195, K198, K259, and R283 each contribute to the substrate site.

Belongs to the F420-dependent glucose-6-phosphate dehydrogenase family. As to quaternary structure, homodimer.

The catalysed reaction is oxidized coenzyme F420-(gamma-L-Glu)(n) + D-glucose 6-phosphate + H(+) = 6-phospho-D-glucono-1,5-lactone + reduced coenzyme F420-(gamma-L-Glu)(n). Its function is as follows. Catalyzes the coenzyme F420-dependent oxidation of glucose 6-phosphate (G6P) to 6-phosphogluconolactone. Appears to have a role in resistance to oxidative stress, via its consumption of G6P that serves as a source of reducing power to combat oxidative stress in mycobacteria. Cannot use NAD, NADP, FAD or FMN instead of coenzyme F420 as an electron acceptor. Exhibits nearly no activity with D-mannose-6-phosphate or D-fructose-6-phosphate as substrate. The protein is F420-dependent glucose-6-phosphate dehydrogenase (fgd) of Mycolicibacterium smegmatis (strain ATCC 700084 / mc(2)155) (Mycobacterium smegmatis).